Consider the following 86-residue polypeptide: Small ribosomal subunit protein eS27y (86 aa).

The C4-type zinc finger occupies 39–61 (CQGCFNITTVFSHSQTVVVCGNC).

The protein belongs to the eukaryotic ribosomal protein eS27 family. The cofactor is Zn(2+).

May be involved in the elimination of damaged mRNA after UV irradiation. The chain is Small ribosomal subunit protein eS27y (RPS27B) from Arabidopsis thaliana (Mouse-ear cress).